We begin with the raw amino-acid sequence, 544 residues long: Histone-arginine methyltransferase CARMER (544 aa).

The region spanning 150–459 is the SAM-dependent MTase PRMT-type domain; sequence ASQYFQFYGY…QSYDVTIDLH (310 aa). Positions 163, 172, 196, 218, 247, and 275 each coordinate S-adenosyl-L-methionine. Residues 505-520 show a composition bias toward polar residues; it reads DTQQQQQGSRNSNSML. The segment at 505–527 is disordered; the sequence is DTQQQQQGSRNSNSMLNGGLSVN. The residue at position 514 (Arg-514) is an Asymmetric dimethylarginine; by autocatalysis.

Belongs to the class I-like SAM-binding methyltransferase superfamily. Protein arginine N-methyltransferase family. Homodimer. The dimethylated protein is the major form.

It localises to the cytoplasm. It is found in the nucleus. The enzyme catalyses L-arginyl-[protein] + 2 S-adenosyl-L-methionine = N(omega),N(omega)-dimethyl-L-arginyl-[protein] + 2 S-adenosyl-L-homocysteine + 2 H(+). Its function is as follows. Methylates (mono- and asymmetric dimethylation) the guanidino nitrogens of arginyl residues in proteins. May methylate histone H3 at 'Arg-17' and activate transcription via chromatin remodeling. In Drosophila grimshawi (Hawaiian fruit fly), this protein is Histone-arginine methyltransferase CARMER (Art4).